Reading from the N-terminus, the 195-residue chain is UPF0215 protein TGAM_0348 (195 aa).

This sequence belongs to the UPF0215 family.

This chain is UPF0215 protein TGAM_0348, found in Thermococcus gammatolerans (strain DSM 15229 / JCM 11827 / EJ3).